Consider the following 172-residue polypeptide: Small ribosomal subunit protein uS5 (172 aa).

In terms of domain architecture, S5 DRBM spans 17-80 (MREKMIAVNR…EECRRNLVKV (64 aa)).

This sequence belongs to the universal ribosomal protein uS5 family. In terms of assembly, part of the 30S ribosomal subunit. Contacts proteins S4 and S8.

In terms of biological role, with S4 and S12 plays an important role in translational accuracy. Its function is as follows. Located at the back of the 30S subunit body where it stabilizes the conformation of the head with respect to the body. The protein is Small ribosomal subunit protein uS5 of Paracidovorax citrulli (strain AAC00-1) (Acidovorax citrulli).